The primary structure comprises 649 residues: Leucine-rich repeat transmembrane protein FLRT3 (649 aa).

Positions 1 to 28 are cleaved as a signal peptide; the sequence is MISPAWSIFLIGTKIGLFLQVAPLSVMA. The 30-residue stretch at 29–58 folds into the LRRNT domain; it reads KSCPSVCRCDAGFIYCNDRFLTSIPTGIPE. Over 29–528 the chain is Extracellular; that stretch reads KSCPSVCRCD…KEPYKNPNLP (500 aa). 2 disulfides stabilise this stretch: cysteine 31/cysteine 37 and cysteine 35/cysteine 44. Residues 38–67 form an interaction with ADGRL3 region; that stretch reads DAGFIYCNDRFLTSIPTGIPEDATTLYLQN. LRR repeat units follow at residues 59 to 80, 84 to 104, 105 to 126, 129 to 150, 155 to 176, 177 to 197, 200 to 220, 226 to 247, 248 to 269, and 272 to 293; these read DATTLYLQNNQINNAGIPSDLK, KVERIYLYHNSLDEFPTNLPK, YVKELHLQENNIRTITYDSLSK, YLEELRLDDNSVSAVSIEEGAF, YLRLLFLSRNHLSTIPWGLPRT, IEELRLDDNRIPTISSPSLQG, SLKRLVLDGNLLNNHGLGDKV, NLTELSLVRNSLTAAPVNLPGT, NLRKLYLQDNHINRVPPNAFSY, and QLYRLDMSNNNLSNLPQGIFDD. Asparagine 226 is a glycosylation site (N-linked (GlcNAc...) asparagine). N-linked (GlcNAc...) asparagine glycosylation is found at asparagine 282 and asparagine 296. The 53-residue stretch at 305–357 folds into the LRRCT domain; sequence NPWYCGCKMKWVRDWLQSLPVKVNVRGLMCQAPEKVRGMAIKDLNAELFDCKD. Cysteine 309 and cysteine 334 are disulfide-bonded. The disordered stretch occupies residues 385 to 407; the sequence is VTKQPDIKNPKLTKDHQTTGSPS. Over residues 389–401 the composition is skewed to basic and acidic residues; the sequence is PDIKNPKLTKDHQ. A Fibronectin type-III domain is found at 409–504; the sequence is KTITITVKSV…VCIETETAPL (96 aa). The helical transmembrane segment at 529–549 threads the bilayer; sequence LAAIIGGAVALVTIALLALVC. Residues 550-649 lie on the Cytoplasmic side of the membrane; it reads WYVHRNGSLF…GIPDSDHSHS (100 aa). Residues 622–649 are disordered; the sequence is LYKNNHSESSSNRSYRDSGIPDSDHSHS.

Monomer and homodimer. Self-associates (via leucine-rich repeats), giving rise to homooligomers. Interacts with FGFR1. Interacts (via extracellular domain) with ADGRL1/LPHN1 and LPHN2 (via olfactomedin-like domain). Interacts (via extracellular domain) with ADGRL3 (via olfactomedin-like domain); the interaction is direct. Interacts (via extracellular domain) with UNC5B and UNC5D (via extracellular domain); the interaction is direct. Identified in complexes composed of FLRT3, ADGRL3 and UNC5B, respectively FLRT3, ADGRL3 and UNC5D. May also interact (via extracellular domain) with UNC5A and UNC5C. Interacts (via cytoplasmic domain) with ROBO1. Post-translationally, N-glycosylated. Proteolytic cleavage in the juxtamembrane region gives rise to a soluble ectodomain. Cleavage is probably effected by a metalloprotease.

Its subcellular location is the cell membrane. The protein localises to the presynaptic cell membrane. It is found in the endoplasmic reticulum membrane. It localises to the cell junction. The protein resides in the focal adhesion. Its subcellular location is the secreted. The protein localises to the cell projection. It is found in the axon. It localises to the growth cone membrane. Functionally, functions in cell-cell adhesion, cell migration and axon guidance, exerting an attractive or repulsive role depending on its interaction partners. Plays a role in the spatial organization of brain neurons. Plays a role in vascular development in the retina. Plays a role in cell-cell adhesion via its interaction with ADGRL3 and probably also other latrophilins that are expressed at the surface of adjacent cells. Interaction with the intracellular domain of ROBO1 mediates axon attraction towards cells expressing NTN1. Mediates axon growth cone collapse and plays a repulsive role in neuron guidance via its interaction with UNC5B, and possibly also other UNC-5 family members. Promotes neurite outgrowth (in vitro). Mediates cell-cell contacts that promote an increase both in neurite number and in neurite length. Plays a role in the regulation of the density of glutamaergic synapses. Plays a role in fibroblast growth factor-mediated signaling cascades. Required for normal morphogenesis during embryonic development, but not for normal embryonic patterning. Required for normal ventral closure, headfold fusion and definitive endoderm migration during embryonic development. Required for the formation of a normal basement membrane and the maintenance of a normal anterior visceral endoderm during embryonic development. In Pongo abelii (Sumatran orangutan), this protein is Leucine-rich repeat transmembrane protein FLRT3 (FLRT3).